A 150-amino-acid chain; its full sequence is Large ribosomal subunit protein bL9 (150 aa).

The protein belongs to the bacterial ribosomal protein bL9 family.

In terms of biological role, binds to the 23S rRNA. The polypeptide is Large ribosomal subunit protein bL9 (Erwinia tasmaniensis (strain DSM 17950 / CFBP 7177 / CIP 109463 / NCPPB 4357 / Et1/99)).